Reading from the N-terminus, the 515-residue chain is Cytidine and dCMP deaminase domain-containing protein 1 (515 aa).

Polar residues-rich tracts occupy residues 1-11 and 18-27; these read MKEAGQMQNLE and SVSTQTGSMT. 2 disordered regions span residues 1-27 and 56-83; these read MKEA…GSMT and RQKS…STDK. Positions 60-83 are enriched in basic and acidic residues; it reads QKNEEGKHGPLGDNEEMTRVSTDK. The 99-residue stretch at 71–169 folds into the CMP/dCMP-type deaminase 1 domain; the sequence is GDNEEMTRVS…SLLTEASSSE (99 aa). Zn(2+)-binding residues include His110, Cys135, and Cys138. The Nuclear export signal signature appears at 272–284; it reads NLRQNMKDLILLL. A CMP/dCMP-type deaminase 2 domain is found at 318 to 483; the sequence is EIARHCMVQA…LNPSGAYGLE (166 aa). A Zn(2+)-binding site is contributed by His399. Catalysis depends on Glu401, which acts as the Proton donor. The Zn(2+) site is built by Cys427 and Cys430. The Bipartite nuclear localization signal signature appears at 489–511; the sequence is RRENGVLRPVPQKEEQHQDKKLC. Residues 494–515 are disordered; the sequence is VLRPVPQKEEQHQDKKLCLGIH.

It belongs to the cytidine and deoxycytidylate deaminase family. The cofactor is Zn(2+).

Its subcellular location is the cytoplasm. It is found in the nucleus. It catalyses the reaction 2'-deoxycytidine + H2O + H(+) = 2'-deoxyuridine + NH4(+). It carries out the reaction cytidine + H2O + H(+) = uridine + NH4(+). In terms of biological role, catalyzes the deamination of cytidine and deoxycytidine into uridine and deoxyuridine, respectively. May play an important role in testicular development and spermatogenesis. This is Cytidine and dCMP deaminase domain-containing protein 1 (CDADC1) from Pongo abelii (Sumatran orangutan).